A 472-amino-acid chain; its full sequence is Protein translocase subunit SecD (472 aa).

6 helical membrane-spanning segments follow: residues 8-28 (ILFT…PLSG), 300-320 (TIIN…IIFY), 325-347 (VIAD…WTGA), 353-375 (GIAG…YERI), 396-416 (VFST…VLFF), and 424-444 (GFAV…LVVS).

This sequence belongs to the SecD/SecF family. SecD subfamily. As to quaternary structure, forms a complex with SecF. Part of the essential Sec protein translocation apparatus which comprises SecA, SecYEG and auxiliary proteins SecDF. Other proteins may also be involved.

Its subcellular location is the cell inner membrane. Part of the Sec protein translocase complex. Interacts with the SecYEG preprotein conducting channel. SecDF uses the proton motive force (PMF) to complete protein translocation after the ATP-dependent function of SecA. This chain is Protein translocase subunit SecD, found in Petrotoga mobilis (strain DSM 10674 / SJ95).